Consider the following 202-residue polypeptide: MTVAPRIGTATRTTSESDITVEINLDGTGKVDIDTGLPFFDHMLTAFGVHGSFDLKVHAKGDIEIDAHHTVEDTAIVLGQALLDAIGDKKGIRRFASCQLPMDEALVESVVDISGRPYFVISGEPDHMITSVIGGHYATVINEHFFETLALNSRITLHVICHYGRDPHHITEAEYKAVARALRGAVEMDPRQTGIPSTKGAL.

Belongs to the imidazoleglycerol-phosphate dehydratase family.

It localises to the cytoplasm. It carries out the reaction D-erythro-1-(imidazol-4-yl)glycerol 3-phosphate = 3-(imidazol-4-yl)-2-oxopropyl phosphate + H2O. Its pathway is amino-acid biosynthesis; L-histidine biosynthesis; L-histidine from 5-phospho-alpha-D-ribose 1-diphosphate: step 6/9. This Corynebacterium glutamicum (strain ATCC 13032 / DSM 20300 / JCM 1318 / BCRC 11384 / CCUG 27702 / LMG 3730 / NBRC 12168 / NCIMB 10025 / NRRL B-2784 / 534) protein is Imidazoleglycerol-phosphate dehydratase.